A 181-amino-acid polypeptide reads, in one-letter code: Small ribosomal subunit protein uS4 (181 aa).

The 63-residue stretch at 104–166 folds into the S4 RNA-binding domain; that stretch reads RRLQTIVYKK…VTSSFKSRPP (63 aa).

The protein belongs to the universal ribosomal protein uS4 family. Part of the 30S ribosomal subunit. Contacts protein S5. The interaction surface between S4 and S5 is involved in control of translational fidelity.

One of the primary rRNA binding proteins, it binds directly to 16S rRNA where it nucleates assembly of the body of the 30S subunit. Its function is as follows. With S5 and S12 plays an important role in translational accuracy. The sequence is that of Small ribosomal subunit protein uS4 from Saccharolobus islandicus (strain Y.N.15.51 / Yellowstone #2) (Sulfolobus islandicus).